Reading from the N-terminus, the 314-residue chain is GDSL-like esterase Rv1075c (314 aa).

The N-terminal stretch at 1–21 is a signal peptide; sequence MPRRSTIALATAGALASTGTA. Ser80 functions as the Nucleophile in the catalytic mechanism. The active-site Proton donor is the Asp244. His247 serves as the catalytic Proton acceptor. A disordered region spans residues 276–314; it reads IHETPSRPGTATLEPGHTRHSMMSRLRRPRPARAVPTGG. Residues 293 to 306 are compositionally biased toward basic residues; it reads TRHSMMSRLRRPRP.

Belongs to the 'GDSL' lipolytic enzyme family.

It catalyses the reaction an acetyl ester + H2O = an aliphatic alcohol + acetate + H(+). The catalysed reaction is a butanoate ester + H2O = an aliphatic alcohol + butanoate + H(+). It carries out the reaction triacetin + H2O = diacetylglycerol + acetate + H(+). The enzyme catalyses 1,2,3-tributanoylglycerol + H2O = dibutanoylglycerol + butanoate + H(+). Esterase activity is significantly inhibited by the serine modifier phenylmethylsulfonyl fluoride (PMSF). Completely inhibited by diethyl pyrocarbonate. In terms of biological role, esterase that preferentially hydrolyzes short-chain fatty acids, particularly pNP-acetate (C2) and pNP-butyrate (C4). Also has weak activity with pNP-hexanoate (C6) and pNP-octanoate (C8). It can also hydrolyze short-chain tryglycerides such as triacetin and tributyrin. Important for intracellular survival. The polypeptide is GDSL-like esterase Rv1075c (Mycobacterium tuberculosis (strain ATCC 25618 / H37Rv)).